A 983-amino-acid chain; its full sequence is MTLQRGLPLLLQQYTALFKKNLLLSWRSKRATFLQLFASFFFILLIFCIQAAMEKSFASSTALKTVTDPTALISPPIPPCEDKFFVNLPCYDFVWSGNRSSKVTQIVNAIMKNNPGRSIPIEKVRSFVDPEAVDTWLMANPLLVPGALHFIERNATVISYGIQTNSTPEMNRGRFEDPTFKFQIPLQIAAEREIARSLIGDPNFNWVVGFKEFPHPTIEAIVALDTIGPTFFLAVAMFGFVLQISSLITEKELKLRQAMTMMGVFDTAYWLSWLTWEGILTAISALLTVLFGMMFQFDFFLKNSFPVVFLLFMLFQFNLIGLAFMLSAFISKSTSATTVGFFVFLVGFVTQLATSSGFPYAKKYSRMIRALWSLFPPNTFSQGLKLLADATSTPQDPGISWSKRAECGPNDDTGCVLTINDIYLWLLGTFFLWFVLALYFDNITPNASGVRKSIFYFLKPGYWTGKGGNRVEEGGICSCIGSVPPVDHITPDDEDVLEEETLVKQHSMEGLVDPNVAVQIRGLAKTYPGTTKFGCCKCKKTSPFHALKGLWMNIAKDQLFCLLGPNGAGKTTTINCLTGLFPVTGGDALIYGNSIRSSVGMSNIRKMIGVCPQFDILWDALSGEEHLKLFASIKGLPPSSINSMVEKSLAEVKLTEAGKIRAGSYSGGMKRRLSVAVSLIGDPKLVFLDEPTTGMDPITRRHVWDIIQETKKGRAIILTTHSMEEADILSDRIGIMAKGRLRCIGTSIRLKSRFGTGFIANISFVESNNHNGEAGSDSREPVKKFFKDHLKVKPIEENKAFMTFVIPHDKENLLTSFFAELQDREEEFGISDIQLGLATLEEVFLNIARKAELESAAVDGTMVTLDLTSGSSVEIPVGARFIGIPGTETAENPRGVMVEVYWQQDESGSLCISGHSTEMPIPENIPVTDPVAPGHGGVNLLGRRGRRQVQGIVIDPEFATFTRSGSTSSRRFSRSGSSRRFSS.

The next 6 helical transmembrane spans lie at 33-53 (FLQL…QAAM), 221-241 (IVAL…FGFV), 279-299 (ILTA…QFDF), 305-325 (FPVV…LAFM), 339-359 (VGFF…SGFP), and 416-436 (VLTI…WFVL). Positions 518-763 (VQIRGLAKTY…FGTGFIANIS (246 aa)) constitute an ABC transporter domain. 564–571 (GPNGAGKT) contributes to the ATP binding site. The interval 963–983 (RSGSTSSRRFSRSGSSRRFSS) is disordered.

This sequence belongs to the ABC transporter superfamily. ABCA family. CPR flippase (TC 3.A.1.211) subfamily.

It is found in the membrane. This is ABC transporter A family member 2 (ABCA2) from Arabidopsis thaliana (Mouse-ear cress).